The primary structure comprises 348 residues: RNA 3'-terminal phosphate cyclase (348 aa).

ATP-binding positions include Gln107 and 290–294 (HLADQ). His316 serves as the catalytic Tele-AMP-histidine intermediate.

It belongs to the RNA 3'-terminal cyclase family. Type 1 subfamily.

It localises to the cytoplasm. It carries out the reaction a 3'-end 3'-phospho-ribonucleotide-RNA + ATP = a 3'-end 2',3'-cyclophospho-ribonucleotide-RNA + AMP + diphosphate. Catalyzes the conversion of 3'-phosphate to a 2',3'-cyclic phosphodiester at the end of RNA. The mechanism of action of the enzyme occurs in 3 steps: (A) adenylation of the enzyme by ATP; (B) transfer of adenylate to an RNA-N3'P to produce RNA-N3'PP5'A; (C) and attack of the adjacent 2'-hydroxyl on the 3'-phosphorus in the diester linkage to produce the cyclic end product. The biological role of this enzyme is unknown but it is likely to function in some aspects of cellular RNA processing. The protein is RNA 3'-terminal phosphate cyclase (rtcA) of Nostoc sp. (strain PCC 7120 / SAG 25.82 / UTEX 2576).